The primary structure comprises 268 residues: Ribosomal RNA small subunit methyltransferase A (268 aa).

Residues Asn-18, Leu-20, Gly-45, Glu-66, Asp-91, and Asn-112 each contribute to the S-adenosyl-L-methionine site.

Belongs to the class I-like SAM-binding methyltransferase superfamily. rRNA adenine N(6)-methyltransferase family. RsmA subfamily.

Its subcellular location is the cytoplasm. It catalyses the reaction adenosine(1518)/adenosine(1519) in 16S rRNA + 4 S-adenosyl-L-methionine = N(6)-dimethyladenosine(1518)/N(6)-dimethyladenosine(1519) in 16S rRNA + 4 S-adenosyl-L-homocysteine + 4 H(+). Specifically dimethylates two adjacent adenosines (A1518 and A1519) in the loop of a conserved hairpin near the 3'-end of 16S rRNA in the 30S particle. May play a critical role in biogenesis of 30S subunits. This chain is Ribosomal RNA small subunit methyltransferase A, found in Shewanella baltica (strain OS223).